The following is a 154-amino-acid chain: uncharacterized protein (154 aa).

The transit peptide at 1–42 (MLRVIWKHSSRVTRSIELSNISTTNHTRSLRRLSWISPRRFY) directs the protein to the mitochondrion.

It localises to the mitochondrion. This is an uncharacterized protein from Saccharomyces cerevisiae (strain ATCC 204508 / S288c) (Baker's yeast).